Reading from the N-terminus, the 55-residue chain is Cop-6 protein (55 aa).

It belongs to the transcriptional regulatory CopG/NikR family.

In terms of biological role, acts in trans as a negative regulatory element in pE194 replication. The sequence is that of Cop-6 protein from Staphylococcus aureus.